Reading from the N-terminus, the 199-residue chain is Glycerol-3-phosphate acyltransferase (199 aa).

The next 5 membrane-spanning stretches (helical) occupy residues 4–24, 56–76, 80–100, 115–135, and 154–176; these read FALF…AILI, LAVL…GYYL, QFEL…PIFF, IAPI…FVFL, and YVWW…LIYR.

This sequence belongs to the PlsY family. Probably interacts with PlsX.

The protein resides in the cell inner membrane. It catalyses the reaction an acyl phosphate + sn-glycerol 3-phosphate = a 1-acyl-sn-glycero-3-phosphate + phosphate. It participates in lipid metabolism; phospholipid metabolism. Functionally, catalyzes the transfer of an acyl group from acyl-phosphate (acyl-PO(4)) to glycerol-3-phosphate (G3P) to form lysophosphatidic acid (LPA). This enzyme utilizes acyl-phosphate as fatty acyl donor, but not acyl-CoA or acyl-ACP. This Haemophilus influenzae (strain PittGG) protein is Glycerol-3-phosphate acyltransferase.